Consider the following 217-residue polypeptide: Adenylate kinase (217 aa).

Residue 10–15 (GAGKGT) coordinates ATP. Residues 30-59 (STGDMLRAAVKAGTPLGVEAKKVMDAGGLV) are NMP. Residues Thr-31, Arg-36, 57 to 59 (GLV), 85 to 88 (GFPR), and Gln-92 contribute to the AMP site. The segment at 122–159 (GRRAHLASGRTYHVKYNPPKVAGKDDLTGEDLVQRDDD) is LID. ATP contacts are provided by residues Arg-123 and 132–133 (TY). The AMP site is built by Arg-156 and Arg-167. Residue Gly-203 participates in ATP binding.

It belongs to the adenylate kinase family. As to quaternary structure, monomer.

Its subcellular location is the cytoplasm. The catalysed reaction is AMP + ATP = 2 ADP. It functions in the pathway purine metabolism; AMP biosynthesis via salvage pathway; AMP from ADP: step 1/1. Functionally, catalyzes the reversible transfer of the terminal phosphate group between ATP and AMP. Plays an important role in cellular energy homeostasis and in adenine nucleotide metabolism. The polypeptide is Adenylate kinase (Aromatoleum aromaticum (strain DSM 19018 / LMG 30748 / EbN1) (Azoarcus sp. (strain EbN1))).